The following is a 236-amino-acid chain: Biosynthetic peptidoglycan transglycosylase (236 aa).

The chain crosses the membrane as a helical span at residues 20 to 40 (LVFIVLSVLILPYALIGLYLL).

The protein belongs to the glycosyltransferase 51 family.

The protein localises to the cell inner membrane. It catalyses the reaction [GlcNAc-(1-&gt;4)-Mur2Ac(oyl-L-Ala-gamma-D-Glu-L-Lys-D-Ala-D-Ala)](n)-di-trans,octa-cis-undecaprenyl diphosphate + beta-D-GlcNAc-(1-&gt;4)-Mur2Ac(oyl-L-Ala-gamma-D-Glu-L-Lys-D-Ala-D-Ala)-di-trans,octa-cis-undecaprenyl diphosphate = [GlcNAc-(1-&gt;4)-Mur2Ac(oyl-L-Ala-gamma-D-Glu-L-Lys-D-Ala-D-Ala)](n+1)-di-trans,octa-cis-undecaprenyl diphosphate + di-trans,octa-cis-undecaprenyl diphosphate + H(+). Its pathway is cell wall biogenesis; peptidoglycan biosynthesis. Functionally, peptidoglycan polymerase that catalyzes glycan chain elongation from lipid-linked precursors. In Rhizobium meliloti (strain 1021) (Ensifer meliloti), this protein is Biosynthetic peptidoglycan transglycosylase.